The sequence spans 75 residues: Sec-independent protein translocase protein TatA (75 aa).

Residues 1–21 (MGMPSMPELLIVLAIVVLLFG) form a helical membrane-spanning segment. The tract at residues 47-75 (DEEEEVKEITKKEEPKVEAAAEEKKSENA) is disordered. Residues 53-75 (KEITKKEEPKVEAAAEEKKSENA) show a composition bias toward basic and acidic residues.

Belongs to the TatA/E family. In terms of assembly, the Tat system comprises two distinct complexes: a TatABC complex, containing multiple copies of TatA, TatB and TatC subunits, and a separate TatA complex, containing only TatA subunits. Substrates initially bind to the TatABC complex, which probably triggers association of the separate TatA complex to form the active translocon.

Its subcellular location is the cell inner membrane. Part of the twin-arginine translocation (Tat) system that transports large folded proteins containing a characteristic twin-arginine motif in their signal peptide across membranes. TatA could form the protein-conducting channel of the Tat system. The sequence is that of Sec-independent protein translocase protein TatA from Sulfurovum sp. (strain NBC37-1).